The primary structure comprises 626 residues: Chaperone protein DnaK (626 aa).

Residue T175 is modified to Phosphothreonine; by autocatalysis. Over residues 586 to 606 (GAEGAAAGADGAGASAGSASG) the composition is skewed to low complexity. The disordered stretch occupies residues 586-626 (GAEGAAAGADGAGASAGSASGSDDDTVEAEVVDDDDDKDNK). Acidic residues predominate over residues 607 to 626 (SDDDTVEAEVVDDDDDKDNK).

This sequence belongs to the heat shock protein 70 family.

Its function is as follows. Acts as a chaperone. The protein is Chaperone protein DnaK of Bifidobacterium longum (strain DJO10A).